Reading from the N-terminus, the 508-residue chain is Photosystem II CP47 reaction center protein (508 aa).

The next 6 membrane-spanning stretches (helical) occupy residues Ala21 to Ser36, Ile101 to Trp115, Gly140 to Phe156, Ile203 to Ser218, Val237 to Val252, and Asn457 to Arg472.

The protein belongs to the PsbB/PsbC family. PsbB subfamily. As to quaternary structure, PSII is composed of 1 copy each of membrane proteins PsbA, PsbB, PsbC, PsbD, PsbE, PsbF, PsbH, PsbI, PsbJ, PsbK, PsbL, PsbM, PsbT, PsbX, PsbY, PsbZ, Psb30/Ycf12, at least 3 peripheral proteins of the oxygen-evolving complex and a large number of cofactors. It forms dimeric complexes. It depends on Binds multiple chlorophylls. PSII binds additional chlorophylls, carotenoids and specific lipids. as a cofactor.

It is found in the plastid. Its subcellular location is the chloroplast thylakoid membrane. One of the components of the core complex of photosystem II (PSII). It binds chlorophyll and helps catalyze the primary light-induced photochemical processes of PSII. PSII is a light-driven water:plastoquinone oxidoreductase, using light energy to abstract electrons from H(2)O, generating O(2) and a proton gradient subsequently used for ATP formation. This chain is Photosystem II CP47 reaction center protein, found in Staurastrum punctulatum (Green alga).